The primary structure comprises 95 residues: Co-chaperonin GroES (95 aa).

It belongs to the GroES chaperonin family. As to quaternary structure, heptamer of 7 subunits arranged in a ring. Interacts with the chaperonin GroEL.

The protein localises to the cytoplasm. Functionally, together with the chaperonin GroEL, plays an essential role in assisting protein folding. The GroEL-GroES system forms a nano-cage that allows encapsulation of the non-native substrate proteins and provides a physical environment optimized to promote and accelerate protein folding. GroES binds to the apical surface of the GroEL ring, thereby capping the opening of the GroEL channel. In Beijerinckia indica subsp. indica (strain ATCC 9039 / DSM 1715 / NCIMB 8712), this protein is Co-chaperonin GroES.